A 198-amino-acid chain; its full sequence is Chitin synthase 2 (198 aa).

The protein belongs to the chitin synthase family. Class III subfamily.

It localises to the cell membrane. It catalyses the reaction [(1-&gt;4)-N-acetyl-beta-D-glucosaminyl](n) + UDP-N-acetyl-alpha-D-glucosamine = [(1-&gt;4)-N-acetyl-beta-D-glucosaminyl](n+1) + UDP + H(+). Its function is as follows. Polymerizes chitin, a structural polymer of the cell wall and septum, by transferring the sugar moiety of UDP-GlcNAc to the non-reducing end of the growing chitin polymer. The sequence is that of Chitin synthase 2 (CHS2) from Rhinocladiella atrovirens.